Reading from the N-terminus, the 213-residue chain is Uridine kinase (213 aa).

ATP is bound at residue 14–21; that stretch reads GASASGKS.

This sequence belongs to the uridine kinase family.

It localises to the cytoplasm. The catalysed reaction is uridine + ATP = UMP + ADP + H(+). It catalyses the reaction cytidine + ATP = CMP + ADP + H(+). It participates in pyrimidine metabolism; CTP biosynthesis via salvage pathway; CTP from cytidine: step 1/3. The protein operates within pyrimidine metabolism; UMP biosynthesis via salvage pathway; UMP from uridine: step 1/1. This is Uridine kinase from Vibrio parahaemolyticus serotype O3:K6 (strain RIMD 2210633).